Consider the following 288-residue polypeptide: Ribosomal RNA small subunit methyltransferase A (288 aa).

Over residues 1 to 14 (MSKNQGGNKHQGGS) the composition is skewed to polar residues. Positions 1 to 21 (MSKNQGGNKHQGGSKTHLGHR) are disordered. Residues asparagine 29, leucine 31, glycine 56, glutamate 77, aspartate 102, and asparagine 122 each coordinate S-adenosyl-L-methionine.

It belongs to the class I-like SAM-binding methyltransferase superfamily. rRNA adenine N(6)-methyltransferase family. RsmA subfamily.

It is found in the cytoplasm. The catalysed reaction is adenosine(1518)/adenosine(1519) in 16S rRNA + 4 S-adenosyl-L-methionine = N(6)-dimethyladenosine(1518)/N(6)-dimethyladenosine(1519) in 16S rRNA + 4 S-adenosyl-L-homocysteine + 4 H(+). Functionally, specifically dimethylates two adjacent adenosines (A1518 and A1519) in the loop of a conserved hairpin near the 3'-end of 16S rRNA in the 30S particle. May play a critical role in biogenesis of 30S subunits. The polypeptide is Ribosomal RNA small subunit methyltransferase A (Idiomarina loihiensis (strain ATCC BAA-735 / DSM 15497 / L2-TR)).